Consider the following 865-residue polypeptide: Leucine--tRNA ligase (865 aa).

The 'HIGH' region signature appears at Pro58 to His68. The 'KMSKS' region signature appears at Lys629–Ser633. Lys632 is a binding site for ATP.

It belongs to the class-I aminoacyl-tRNA synthetase family.

Its subcellular location is the cytoplasm. The enzyme catalyses tRNA(Leu) + L-leucine + ATP = L-leucyl-tRNA(Leu) + AMP + diphosphate. This chain is Leucine--tRNA ligase, found in Synechococcus elongatus (strain ATCC 33912 / PCC 7942 / FACHB-805) (Anacystis nidulans R2).